The primary structure comprises 152 residues: Phosphopantetheine adenylyltransferase (152 aa).

Ser-9 is a binding site for substrate. Residues 9-10 (SF) and His-17 contribute to the ATP site. Substrate contacts are provided by Lys-41, Thr-73, and Arg-87. ATP contacts are provided by residues 88-90 (GLR), Glu-98, and 122-128 (TSFISSS).

The protein belongs to the bacterial CoaD family. In terms of assembly, homohexamer. The cofactor is Mg(2+).

It is found in the cytoplasm. It catalyses the reaction (R)-4'-phosphopantetheine + ATP + H(+) = 3'-dephospho-CoA + diphosphate. It participates in cofactor biosynthesis; coenzyme A biosynthesis; CoA from (R)-pantothenate: step 4/5. Functionally, reversibly transfers an adenylyl group from ATP to 4'-phosphopantetheine, yielding dephospho-CoA (dPCoA) and pyrophosphate. This is Phosphopantetheine adenylyltransferase from Flavobacterium johnsoniae (strain ATCC 17061 / DSM 2064 / JCM 8514 / BCRC 14874 / CCUG 350202 / NBRC 14942 / NCIMB 11054 / UW101) (Cytophaga johnsonae).